The sequence spans 419 residues: Imidazolonepropionase (419 aa).

Residues His82 and His84 each coordinate Fe(3+). The Zn(2+) site is built by His82 and His84. Residues Arg91, Tyr154, and His187 each contribute to the 4-imidazolone-5-propanoate site. N-formimidoyl-L-glutamate is bound at residue Tyr154. His252 contributes to the Fe(3+) binding site. His252 lines the Zn(2+) pocket. Glu255 contacts 4-imidazolone-5-propanoate. Asp326 serves as a coordination point for Fe(3+). A Zn(2+)-binding site is contributed by Asp326. N-formimidoyl-L-glutamate is bound by residues Asn328 and Gly330. Ser331 provides a ligand contact to 4-imidazolone-5-propanoate.

Belongs to the metallo-dependent hydrolases superfamily. HutI family. Requires Zn(2+) as cofactor. Fe(3+) serves as cofactor.

It is found in the cytoplasm. The catalysed reaction is 4-imidazolone-5-propanoate + H2O = N-formimidoyl-L-glutamate. It participates in amino-acid degradation; L-histidine degradation into L-glutamate; N-formimidoyl-L-glutamate from L-histidine: step 3/3. Functionally, catalyzes the hydrolytic cleavage of the carbon-nitrogen bond in imidazolone-5-propanoate to yield N-formimidoyl-L-glutamate. It is the third step in the universal histidine degradation pathway. This chain is Imidazolonepropionase, found in Clostridium tetani (strain Massachusetts / E88).